Consider the following 367-residue polypeptide: Biotin--protein ligase 1, chloroplastic (367 aa).

Residues 1-37 constitute a chloroplast transit peptide; the sequence is MEAVRSTTTLSNFHLLNILVLRSLKPLHRLSFSFSAS. The region spanning 105–289 is the BPL/LPL catalytic domain; it reads IITHRFGRFL…KFEKFFDLFM (185 aa). Residues 122 to 124, Q145, 149 to 151, and K220 contribute to the biotin site; these read STH and RGR.

Belongs to the biotin--protein ligase family. In terms of tissue distribution, expressed in roots, leaves, stems, flowers, siliques and seeds.

Its subcellular location is the plastid. The protein resides in the chloroplast. The protein localises to the cytoplasm. It localises to the cytosol. It carries out the reaction apo-[3-methylcrotonoyl-CoA:carbon-dioxide ligase (ADP-forming)] + biotin + ATP = holo-[3-methylcrotonoyl-CoA:carbon-dioxide ligase (ADP-forming)] + AMP + diphosphate + H(+). It catalyses the reaction biotin + L-lysyl-[protein] + ATP = N(6)-biotinyl-L-lysyl-[protein] + AMP + diphosphate + H(+). Plays a major role in biotin-dependent carboxylase biotinylation. Catalyzes the addition of biotin to the biotin carboxyl carrier protein (BCCP) subunit of acetyl-CoA carboxylase. Can also biotinylate methylcrotonyl-CoA carboxylase. Is responsible for most, if not all, biotin--protein ligase activity in Arabidopsis. Is essential for plant viability and required for ovule development. This is Biotin--protein ligase 1, chloroplastic from Arabidopsis thaliana (Mouse-ear cress).